We begin with the raw amino-acid sequence, 226 residues long: Uridylate kinase (226 aa).

9-10 (GS) contributes to the ATP binding site. Glycine 46 serves as a coordination point for UMP. Positions 47 and 51 each coordinate ATP. UMP-binding positions include aspartate 68 and 116 to 122 (THPGHTT). Threonine 142, asparagine 143, tyrosine 148, and aspartate 151 together coordinate ATP.

It belongs to the UMP kinase family. In terms of assembly, homohexamer.

It localises to the cytoplasm. The enzyme catalyses UMP + ATP = UDP + ADP. It functions in the pathway pyrimidine metabolism; CTP biosynthesis via de novo pathway; UDP from UMP (UMPK route): step 1/1. With respect to regulation, inhibited by UTP. Its function is as follows. Catalyzes the reversible phosphorylation of UMP to UDP. The polypeptide is Uridylate kinase (Methanocaldococcus jannaschii (strain ATCC 43067 / DSM 2661 / JAL-1 / JCM 10045 / NBRC 100440) (Methanococcus jannaschii)).